Reading from the N-terminus, the 281-residue chain is Lectin (281 aa).

An N-terminal signal peptide occupies residues Met-1–Ser-26. Asn-43 and Asn-139 each carry an N-linked (GlcNAc...) asparagine glycan. Residues Ala-269 to Ile-281 constitute a propeptide that is removed on maturation.

It belongs to the leguminous lectin family. Homodimer. A minor C-terminal proteolytic processing site is observed at position 268.

Functionally, galactose and N-acetyllactosamine specific lectin. Binds to the H-2 blood type determinant fucosyl-N-acetyllactosamine. This Erythrina corallodendron (Coral tree) protein is Lectin.